The following is a 355-amino-acid chain: Uroporphyrinogen decarboxylase (355 aa).

Substrate-binding positions include 27 to 31 (RQAGR), Asp78, Tyr155, Ser210, and His328.

It belongs to the uroporphyrinogen decarboxylase family. In terms of assembly, homodimer.

The protein resides in the cytoplasm. It catalyses the reaction uroporphyrinogen III + 4 H(+) = coproporphyrinogen III + 4 CO2. It functions in the pathway porphyrin-containing compound metabolism; protoporphyrin-IX biosynthesis; coproporphyrinogen-III from 5-aminolevulinate: step 4/4. Catalyzes the decarboxylation of four acetate groups of uroporphyrinogen-III to yield coproporphyrinogen-III. The protein is Uroporphyrinogen decarboxylase of Azotobacter vinelandii (strain DJ / ATCC BAA-1303).